The chain runs to 340 residues: Protein-arginine kinase (340 aa).

Residues 21 to 242 (VVLSSRIRLA…EQIIMQERVA (222 aa)) enclose the Phosphagen kinase C-terminal domain. ATP-binding positions include 24-28 (SSRIR), H79, R113, 164-168 (RASVM), and 195-200 (RGIYGE).

The protein belongs to the ATP:guanido phosphotransferase family.

It catalyses the reaction L-arginyl-[protein] + ATP = N(omega)-phospho-L-arginyl-[protein] + ADP + H(+). In terms of biological role, catalyzes the specific phosphorylation of arginine residues in proteins. The chain is Protein-arginine kinase from Listeria welshimeri serovar 6b (strain ATCC 35897 / DSM 20650 / CCUG 15529 / CIP 8149 / NCTC 11857 / SLCC 5334 / V8).